We begin with the raw amino-acid sequence, 267 residues long: Cilia- and flagella-associated protein 300 (267 aa).

It belongs to the CFAP300 family. Interacts with DNAAF2. Expressed in the left-right organiser (LRO) node at 8.25 dpc.

Its subcellular location is the cytoplasm. The protein resides in the cytoskeleton. It is found in the cilium axoneme. Its function is as follows. Cilium- and flagellum-specific protein that plays a role in axonemal structure organization and motility. May play a role in outer and inner dynein arm assembly. This Mus musculus (Mouse) protein is Cilia- and flagella-associated protein 300.